The following is a 387-amino-acid chain: Carboxyaminopropylagmatine decarboxylase (387 aa).

Position 52 is an N6-(pyridoxal phosphate)lysine (Lys-52).

This sequence belongs to the Orn/Lys/Arg decarboxylase class-II family. Pyridoxal 5'-phosphate is required as a cofactor.

The catalysed reaction is N(1)-[(S)-3-amino-3-carboxypropyl]agmatine + H(+) = N(1)-(3-aminopropyl)agmatine + CO2. It participates in amine and polyamine biosynthesis; spermidine biosynthesis. Functionally, decarboxylase involved in the biosynthesis of spermidine via the carboxyaminopropylagmatine (CAPA) pathway. Catalyzes the decarboxylation of CAPA to form aminopropylagmatine (APA). Can also decarboxylate carboxyspermidine and carboxynorspermidine, but not ornithine, arginine, lysine and meso-diaminopimelate. The protein is Carboxyaminopropylagmatine decarboxylase of Synechocystis sp. (strain ATCC 27184 / PCC 6803 / Kazusa).